The primary structure comprises 502 residues: Premnaspirodiene oxygenase (502 aa).

Residues 2–22 (QFFSLVSIFLFLSFLFLLRKW) traverse the membrane as a helical segment. Residue Cys-440 participates in heme binding.

This sequence belongs to the cytochrome P450 family. The cofactor is heme.

Its subcellular location is the membrane. It catalyses the reaction (-)-vetispiradiene + 2 reduced [NADPH--hemoprotein reductase] + 2 O2 = solavetivone + 2 oxidized [NADPH--hemoprotein reductase] + 3 H2O + 2 H(+). Functionally, involved in the biosynthesis of solavetivone, a potent antifungal phytoalexin. Catalyzes the successive and independent hydroxylations of premnaspirodiene and solavetivol. The first hydroxylation step is 3-fold more efficient than the second hydroxylation reaction. The chain is Premnaspirodiene oxygenase (CYP71D55) from Hyoscyamus muticus (Egyptian henbane).